A 152-amino-acid chain; its full sequence is Transcriptional regulator MraZ (152 aa).

2 SpoVT-AbrB domains span residues 5–52 and 81–124; these read ASSL…PLAQ and ATEY…DEAR.

The protein belongs to the MraZ family. As to quaternary structure, forms oligomers.

The protein resides in the cytoplasm. The protein localises to the nucleoid. The protein is Transcriptional regulator MraZ of Pseudoalteromonas translucida (strain TAC 125).